We begin with the raw amino-acid sequence, 493 residues long: Lysine--tRNA ligase (493 aa).

Residues glutamate 406 and glutamate 413 each coordinate Mg(2+).

It belongs to the class-II aminoacyl-tRNA synthetase family. In terms of assembly, homodimer. The cofactor is Mg(2+).

It localises to the cytoplasm. The enzyme catalyses tRNA(Lys) + L-lysine + ATP = L-lysyl-tRNA(Lys) + AMP + diphosphate. In Leuconostoc citreum (strain KM20), this protein is Lysine--tRNA ligase.